A 310-amino-acid chain; its full sequence is Malate dehydrogenase (310 aa).

Residues 7 to 12 (GAGNVG) and Asp-32 contribute to the NAD(+) site. Arg-81 and Arg-87 together coordinate substrate. Residues Asn-94 and 117–119 (VSN) each bind NAD(+). Residues Asn-119 and Arg-150 each coordinate substrate. Residue His-174 is the Proton acceptor of the active site.

Belongs to the LDH/MDH superfamily. MDH type 3 family.

It catalyses the reaction (S)-malate + NAD(+) = oxaloacetate + NADH + H(+). Its function is as follows. Catalyzes the reversible oxidation of malate to oxaloacetate. In Chloroherpeton thalassium (strain ATCC 35110 / GB-78), this protein is Malate dehydrogenase.